The primary structure comprises 494 residues: 3-octaprenyl-4-hydroxybenzoate carboxy-lyase (494 aa).

Asn172 is a binding site for Mn(2+). Residues 175–177 (IYR), 189–191 (RWL), and 194–195 (RG) contribute to the prenylated FMN site. Glu238 contacts Mn(2+). The active-site Proton donor is Asp287.

It belongs to the UbiD family. Homohexamer. Prenylated FMN serves as cofactor. The cofactor is Mn(2+).

The protein resides in the cell membrane. It carries out the reaction a 4-hydroxy-3-(all-trans-polyprenyl)benzoate + H(+) = a 2-(all-trans-polyprenyl)phenol + CO2. Its pathway is cofactor biosynthesis; ubiquinone biosynthesis. Its function is as follows. Catalyzes the decarboxylation of 3-octaprenyl-4-hydroxy benzoate to 2-octaprenylphenol, an intermediate step in ubiquinone biosynthesis. The protein is 3-octaprenyl-4-hydroxybenzoate carboxy-lyase of Cronobacter sakazakii (strain ATCC BAA-894) (Enterobacter sakazakii).